A 150-amino-acid polypeptide reads, in one-letter code: Macrodomain Ter protein (150 aa).

It belongs to the MatP family. As to quaternary structure, homodimer.

Its subcellular location is the cytoplasm. Functionally, required for spatial organization of the terminus region of the chromosome (Ter macrodomain) during the cell cycle. Prevents early segregation of duplicated Ter macrodomains during cell division. Binds specifically to matS, which is a 13 bp signature motif repeated within the Ter macrodomain. This chain is Macrodomain Ter protein, found in Klebsiella pneumoniae (strain 342).